A 455-amino-acid polypeptide reads, in one-letter code: tRNA modification GTPase MnmE (455 aa).

(6S)-5-formyl-5,6,7,8-tetrahydrofolate is bound by residues Arg-24, Glu-81, and Lys-121. Residues 217–378 (GMKVVIAGRP…LKEHLKDIMG (162 aa)) enclose the TrmE-type G domain. Asn-227 contacts K(+). Residues 227–232 (NAGKSS), 246–252 (TDIAGTT), 271–274 (DTAG), and 336–339 (NKAD) contribute to the GTP site. Ser-231 is a Mg(2+) binding site. 3 residues coordinate K(+): Thr-246, Ile-248, and Thr-251. Residue Thr-252 coordinates Mg(2+). A (6S)-5-formyl-5,6,7,8-tetrahydrofolate-binding site is contributed by Lys-455.

Belongs to the TRAFAC class TrmE-Era-EngA-EngB-Septin-like GTPase superfamily. TrmE GTPase family. Homodimer. Heterotetramer of two MnmE and two MnmG subunits. It depends on K(+) as a cofactor.

The protein resides in the cytoplasm. Functionally, exhibits a very high intrinsic GTPase hydrolysis rate. Involved in the addition of a carboxymethylaminomethyl (cmnm) group at the wobble position (U34) of certain tRNAs, forming tRNA-cmnm(5)s(2)U34. This is tRNA modification GTPase MnmE from Psychromonas ingrahamii (strain DSM 17664 / CCUG 51855 / 37).